The following is a 128-amino-acid chain: Methylglyoxal synthase (128 aa).

Residues Met-1–Ala-128 enclose the MGS-like domain. Residues His-8, Lys-12, Thr-34–Thr-37, and Ser-54–Gly-55 each bind substrate. Asp-60 functions as the Proton donor/acceptor in the catalytic mechanism. A substrate-binding site is contributed by His-87.

The protein belongs to the methylglyoxal synthase family.

The enzyme catalyses dihydroxyacetone phosphate = methylglyoxal + phosphate. In terms of biological role, catalyzes the formation of methylglyoxal from dihydroxyacetone phosphate. This chain is Methylglyoxal synthase, found in Moorella thermoacetica (strain ATCC 39073 / JCM 9320).